An 82-amino-acid polypeptide reads, in one-letter code: Toxin Tpa7 (82 aa).

Residues 1–20 form the signal peptide; the sequence is MKGMILLISCLMLIEVVVEC. Residues 21 to 82 form the LCN-type CS-alpha/beta domain; sequence KEGYPLDTLN…KIWDLKKNKC (62 aa). 4 disulfide bridges follow: cysteine 32/cysteine 82, cysteine 36/cysteine 58, cysteine 44/cysteine 63, and cysteine 48/cysteine 65.

Belongs to the long (4 C-C) scorpion toxin superfamily. Sodium channel inhibitor family. Beta subfamily. In terms of tissue distribution, expressed by the venom gland.

It localises to the secreted. Functionally, beta toxins bind voltage-independently at site-4 of sodium channels (Nav) and shift the voltage of activation toward more negative potentials thereby affecting sodium channel activation and promoting spontaneous and repetitive firing. The chain is Toxin Tpa7 from Tityus pachyurus (Colombian scorpion).